Consider the following 204-residue polypeptide: Quinol oxidase subunit 3 (204 aa).

5 helical membrane passes run 27-47, 66-86, 95-115, 140-160, and 184-204; these read FWIF…TFFV, LVMI…IAVH, GVVI…GCEI, LLGT…GILI, and FLDV…LGGL.

It belongs to the cytochrome c oxidase subunit 3 family.

It is found in the cell membrane. It catalyses the reaction 2 a quinol + O2 = 2 a quinone + 2 H2O. Catalyzes quinol oxidation with the concomitant reduction of oxygen to water. Major component for energy conversion during vegetative growth. The protein is Quinol oxidase subunit 3 (qoxC) of Bacillus spizizenii (strain ATCC 23059 / NRRL B-14472 / W23) (Bacillus subtilis subsp. spizizenii).